A 389-amino-acid chain; its full sequence is Leucine aminopeptidase 1 (389 aa).

Positions 1–18 (MKSSVLLSLCTAALVAGA) are cleaved as a signal peptide. Residues 19–89 (AHPLEPQVVL…INANRLIEKS (71 aa)) constitute a propeptide that is removed on maturation. N-linked (GlcNAc...) asparagine glycans are attached at residues Asn-99, Asn-156, and Asn-180. Zn(2+)-binding residues include His-188, Asp-207, Glu-246, and Asp-273. Cys-322 and Cys-326 are joined by a disulfide. His-355 serves as a coordination point for Zn(2+).

Belongs to the peptidase M28 family. M28E subfamily. As to quaternary structure, monomer. It depends on Zn(2+) as a cofactor.

The protein resides in the secreted. Extracellular aminopeptidase that allows assimilation of proteinaceous substrates. This Phaeosphaeria nodorum (strain SN15 / ATCC MYA-4574 / FGSC 10173) (Glume blotch fungus) protein is Leucine aminopeptidase 1 (LAP1).